We begin with the raw amino-acid sequence, 432 residues long: Ubiquitin-like modifier-activating enzyme 5 (432 aa).

The tract at residues 25–47 (ETKKNQTPSVLKGPTVSQERPSA) is disordered. Residues 29–44 (NQTPSVLKGPTVSQER) show a composition bias toward polar residues. Gly-96, Asp-117, Lys-140, Asn-163, and Asn-196 together coordinate ATP. Cys-238 and Cys-241 together coordinate Zn(2+). Cys-262 (glycyl thioester intermediate) is an active-site residue. 2 residues coordinate Zn(2+): Cys-315 and Cys-320. The interval 363–406 (DTTEAPSSSAATEVAPGLKFAYEPTQTPKKNSSDNLKLSPSQAV) is disordered. The segment covering 386–406 (PTQTPKKNSSDNLKLSPSQAV) has biased composition (polar residues).

The protein belongs to the ubiquitin-activating E1 family. UBA5 subfamily. As to quaternary structure, interacts with ufc-1.

Functionally, E1-like enzyme which activates ufm-1. Required for interaction between ufm-1 and ufc-1. The chain is Ubiquitin-like modifier-activating enzyme 5 from Caenorhabditis briggsae.